The chain runs to 566 residues: Cytokine-like nuclear factor N-PAC (566 aa).

Residues 9-70 (VNDLVWAKMK…ETQIKPYLQF (62 aa)) enclose the PWWP domain. Disordered regions lie at residues 127-147 (VASG…NTTT) and 206-234 (MLDD…SSLD). A dehydrogenase domain region spans residues 274–566 (RNIKASQLKF…ASAVYVRARF (293 aa)). Residues 284–298 (GFLG…IVKN) and Lys518 contribute to the NAD(+) site.

This sequence belongs to the HIBADH-related family. NP60 subfamily. In terms of assembly, binds to mononucleosomes. Interacts with male-specific lethal (MSL) histone acetyltransferase complex at least composed of mof, msl-1, msl-2 and msl-3.

It is found in the chromosome. Functionally, may have oxidoreductase activity. The sequence is that of Cytokine-like nuclear factor N-PAC from Anopheles gambiae (African malaria mosquito).